We begin with the raw amino-acid sequence, 108 residues long: Small ribosomal subunit protein bS6 (108 aa).

This sequence belongs to the bacterial ribosomal protein bS6 family.

Functionally, binds together with bS18 to 16S ribosomal RNA. The protein is Small ribosomal subunit protein bS6 of Nostoc sp. (strain PCC 7120 / SAG 25.82 / UTEX 2576).